Here is a 226-residue protein sequence, read N- to C-terminus: Leucyl/phenylalanyl-tRNA--protein transferase (226 aa).

It belongs to the L/F-transferase family.

The protein resides in the cytoplasm. The enzyme catalyses N-terminal L-lysyl-[protein] + L-leucyl-tRNA(Leu) = N-terminal L-leucyl-L-lysyl-[protein] + tRNA(Leu) + H(+). It carries out the reaction N-terminal L-arginyl-[protein] + L-leucyl-tRNA(Leu) = N-terminal L-leucyl-L-arginyl-[protein] + tRNA(Leu) + H(+). It catalyses the reaction L-phenylalanyl-tRNA(Phe) + an N-terminal L-alpha-aminoacyl-[protein] = an N-terminal L-phenylalanyl-L-alpha-aminoacyl-[protein] + tRNA(Phe). Functions in the N-end rule pathway of protein degradation where it conjugates Leu, Phe and, less efficiently, Met from aminoacyl-tRNAs to the N-termini of proteins containing an N-terminal arginine or lysine. This chain is Leucyl/phenylalanyl-tRNA--protein transferase, found in Pseudomonas aeruginosa (strain LESB58).